A 336-amino-acid chain; its full sequence is Isopentenyl-diphosphate delta-isomerase (336 aa).

5-6 (RK) lines the substrate pocket. Residues 60 to 62 (AMT), serine 90, and asparagine 117 contribute to the FMN site. A substrate-binding site is contributed by glutamine 147. Glutamate 148 contacts Mg(2+). FMN contacts are provided by residues lysine 179, serine 204, threonine 209, 253-255 (GVR), and 274-275 (SR).

The protein belongs to the IPP isomerase type 2 family. Homooctamer. Dimer of tetramers. FMN is required as a cofactor. It depends on NADPH as a cofactor. Requires Mg(2+) as cofactor.

It is found in the cytoplasm. The catalysed reaction is isopentenyl diphosphate = dimethylallyl diphosphate. Functionally, involved in the biosynthesis of isoprenoids. Catalyzes the 1,3-allylic rearrangement of the homoallylic substrate isopentenyl (IPP) to its allylic isomer, dimethylallyl diphosphate (DMAPP). The chain is Isopentenyl-diphosphate delta-isomerase from Streptococcus pneumoniae (strain 70585).